Here is a 441-residue protein sequence, read N- to C-terminus: GTPase Der (441 aa).

2 EngA-type G domains span residues 3–167 and 176–351; these read PLIA…PKGS and TKIA…EQFA. Residues 9–16, 56–60, 119–122, 182–189, 229–233, and 294–297 contribute to the GTP site; these read GRPNVGKS, DTGGF, NKID, DTAGI, and NKWD. The KH-like domain occupies 352–436; it reads RRITTSDLNR…PMRLLFKGRE (85 aa).

It belongs to the TRAFAC class TrmE-Era-EngA-EngB-Septin-like GTPase superfamily. EngA (Der) GTPase family. In terms of assembly, associates with the 50S ribosomal subunit.

In terms of biological role, GTPase that plays an essential role in the late steps of ribosome biogenesis. The polypeptide is GTPase Der (Geotalea uraniireducens (strain Rf4) (Geobacter uraniireducens)).